An 834-amino-acid chain; its full sequence is Ras GTPase-activating protein 3 (834 aa).

2 C2 domains span residues 1-112 and 123-263; these read MAVE…DTWF and VQGK…EAWY. Position 2 is an N-acetylalanine (alanine 2). Tyrosine 66 carries the post-translational modification Phosphotyrosine. At serine 77 the chain carries Phosphoserine. Residue threonine 110 is modified to Phosphothreonine. In terms of domain architecture, Ras-GAP spans 346–561; the sequence is GRVVPFISAI…DAVKNFLDLI (216 aa). The 102-residue stretch at 576–677 folds into the PH domain; sequence ILLKEGFMIK…WIDILTKVSQ (102 aa). The Btk-type zinc-finger motif lies at 679 to 715; that stretch reads NQKRLTVFHPSAYLNGHWLCCRASSDTAAGCTPCTGG. 4 residues coordinate Zn(2+): histidine 687, cysteine 698, cysteine 699, and cysteine 709. Serine 809 and serine 833 each carry phosphoserine.

High levels in brain, lower in spleen and lung.

Inhibitory regulator of the Ras-cyclic AMP pathway. May bind inositol tetrakisphosphate (IP4). The sequence is that of Ras GTPase-activating protein 3 (Rasa3) from Mus musculus (Mouse).